A 347-amino-acid polypeptide reads, in one-letter code: Phenylalanine--tRNA ligase alpha subunit (347 aa).

Glu-265 is a binding site for Mg(2+).

The protein belongs to the class-II aminoacyl-tRNA synthetase family. Phe-tRNA synthetase alpha subunit type 1 subfamily. In terms of assembly, tetramer of two alpha and two beta subunits. Mg(2+) serves as cofactor.

Its subcellular location is the cytoplasm. It carries out the reaction tRNA(Phe) + L-phenylalanine + ATP = L-phenylalanyl-tRNA(Phe) + AMP + diphosphate + H(+). This Mycolicibacterium gilvum (strain PYR-GCK) (Mycobacterium gilvum (strain PYR-GCK)) protein is Phenylalanine--tRNA ligase alpha subunit.